We begin with the raw amino-acid sequence, 545 residues long: Glucose-6-phosphate isomerase (545 aa).

E351 functions as the Proton donor in the catalytic mechanism. Catalysis depends on residues H382 and K510.

The protein belongs to the GPI family.

The protein resides in the cytoplasm. It catalyses the reaction alpha-D-glucose 6-phosphate = beta-D-fructose 6-phosphate. Its pathway is carbohydrate biosynthesis; gluconeogenesis. It participates in carbohydrate degradation; glycolysis; D-glyceraldehyde 3-phosphate and glycerone phosphate from D-glucose: step 2/4. Its function is as follows. Catalyzes the reversible isomerization of glucose-6-phosphate to fructose-6-phosphate. This chain is Glucose-6-phosphate isomerase, found in Shewanella woodyi (strain ATCC 51908 / MS32).